A 376-amino-acid polypeptide reads, in one-letter code: MSATLELAKRLIACASITPRDAGCQGLLAQRLLALGFQGEQMNFGEVDNIWLRRGQKPPLFVFAGHTDVVPPGPPDKWLTDPFTPEVRNGLLYGRGAADMKGSLAAMVTACEHFINVHSDHAGSIAFLLTSDEEGPAINGTIKVVETLQARGEKIDYCLVGEPTSQKQVGDMIKNGRRGSLGGRLIVRGIQGHVAYPHLADNPIHSLAPALAVLCAQTWDQGNKDFPPTTFQISNIQGGTGATNVIPGEVEILFNFRYSTEVTHQQLQQQMEEILSQQRLNYELEWTLSGKPFLTAPGSLMTAVSQAVRGITGIDAEFSTTGGTSDGRFIAPTGAQVVELGPVNATIHKVNECVAVADLEILSRIYSRILEILLTE.

His66 lines the Zn(2+) pocket. Asp68 is an active-site residue. Asp99 contacts Zn(2+). Glu133 (proton acceptor) is an active-site residue. Zn(2+)-binding residues include Glu134, Glu162, and His348.

The protein belongs to the peptidase M20A family. DapE subfamily. Homodimer. Zn(2+) serves as cofactor. The cofactor is Co(2+).

The catalysed reaction is N-succinyl-(2S,6S)-2,6-diaminopimelate + H2O = (2S,6S)-2,6-diaminopimelate + succinate. The protein operates within amino-acid biosynthesis; L-lysine biosynthesis via DAP pathway; LL-2,6-diaminopimelate from (S)-tetrahydrodipicolinate (succinylase route): step 3/3. In terms of biological role, catalyzes the hydrolysis of N-succinyl-L,L-diaminopimelic acid (SDAP), forming succinate and LL-2,6-diaminopimelate (DAP), an intermediate involved in the bacterial biosynthesis of lysine and meso-diaminopimelic acid, an essential component of bacterial cell walls. This Nitrosococcus oceani (strain ATCC 19707 / BCRC 17464 / JCM 30415 / NCIMB 11848 / C-107) protein is Succinyl-diaminopimelate desuccinylase.